Here is a 204-residue protein sequence, read N- to C-terminus: Octanoyltransferase (204 aa).

One can recognise a BPL/LPL catalytic domain in the interval 27–204 (KNTKDELWIV…LINYVSRNRH (178 aa)). Substrate contacts are provided by residues 66–73 (RGGQVTYH), 133–135 (ALG), and 146–148 (GLS). The active-site Acyl-thioester intermediate is C164.

The protein belongs to the LipB family.

It is found in the cytoplasm. The enzyme catalyses octanoyl-[ACP] + L-lysyl-[protein] = N(6)-octanoyl-L-lysyl-[protein] + holo-[ACP] + H(+). The protein operates within protein modification; protein lipoylation via endogenous pathway; protein N(6)-(lipoyl)lysine from octanoyl-[acyl-carrier-protein]: step 1/2. Functionally, catalyzes the transfer of endogenously produced octanoic acid from octanoyl-acyl-carrier-protein onto the lipoyl domains of lipoate-dependent enzymes. Lipoyl-ACP can also act as a substrate although octanoyl-ACP is likely to be the physiological substrate. In Vesicomyosocius okutanii subsp. Calyptogena okutanii (strain HA), this protein is Octanoyltransferase.